The chain runs to 594 residues: Acyl-coenzyme A thioesterase 11 (594 aa).

A mitochondrion-targeting transit peptide spans 1 to 20; that stretch reads MIQNVGNHLRRGFASMFSNR. Phosphoserine is present on residues S15 and S25. Positions 20–43 are disordered; that stretch reads RTSRKSISHPESGDPPTMAEGEGY. Residues 45–157 enclose the HotDog ACOT-type 1 domain; that stretch reads NPTEVQMSQL…LATFVAHREL (113 aa). Residues 93-95, 122-124, R183, and 272-274 each bind CoA; these read TAS, NSS, and HFR. A HotDog ACOT-type 2 domain is found at 217-330; sequence EKTRVESVEL…FMTFVVLDKD (114 aa). Residues 370–582 enclose the START domain; the sequence is KQAEVALSVP…FKACESFLLD (213 aa).

The protein resides in the mitochondrion matrix. Its subcellular location is the cytoplasm. It catalyses the reaction hexadecanoyl-CoA + H2O = hexadecanoate + CoA + H(+). The catalysed reaction is tetradecanoyl-CoA + H2O = tetradecanoate + CoA + H(+). The enzyme catalyses dodecanoyl-CoA + H2O = dodecanoate + CoA + H(+). It carries out the reaction butanoyl-CoA + H2O = butanoate + CoA + H(+). Its pathway is lipid metabolism; fatty acid metabolism. Has an acyl-CoA thioesterase activity with a preference for the long chain fatty acyl-CoA thioesters hexadecanoyl-CoA/palmitoyl-CoA and tetradecanoyl-CoA/myristoyl-CoA which are the main substrates in the mitochondrial beta-oxidation pathway. This Mus musculus (Mouse) protein is Acyl-coenzyme A thioesterase 11 (Acot11).